The chain runs to 245 residues: Fibroblast growth factor 13 (245 aa).

Residues 1–36 (MAAAIASSLIRQKRQAREREKSNACKCVSSPSKGKT) form a disordered region. Residues 1–62 (MAAAIASSLI…GSKKRRRRRP (62 aa)) are mediates targeting to the nucleus. The segment at 67 to 201 (KGIVTKLYSR…AHFLPKPLKV (135 aa)) is mediates interaction with sodium channels. Residue Ser208 is modified to Phosphoserine. Residues 213–245 (TEFSRSGSGTPTKSRSVSGVLNGGKSMSHNEST) are disordered. A compositionally biased stretch (polar residues) spans 215–245 (FSRSGSGTPTKSRSVSGVLNGGKSMSHNEST).

The protein belongs to the heparin-binding growth factors family. In terms of assembly, interacts with SCN8A; regulates SCN8A activity. Interacts with SCN1A; may regulate SCN1A activity. Interacts with SCN5A; the interaction is direct and may regulate SNC5A density at membranes and function. May also interact with SCN2A and SCN11A. Interacts with MAPK8IP2; may regulate the MAPK8IP2 scaffolding activity. In terms of processing, may be phosphorylated. In terms of tissue distribution, ubiquitously expressed. Predominantly expressed in the nervous system.

Its subcellular location is the nucleus. It is found in the cytoplasm. It localises to the cell projection. The protein resides in the filopodium. The protein localises to the growth cone. Its subcellular location is the dendrite. It is found in the cell membrane. It localises to the sarcolemma. In terms of biological role, microtubule-binding protein which directly binds tubulin and is involved in both polymerization and stabilization of microtubules. Through its action on microtubules, may participate in the refinement of axons by negatively regulating axonal and leading processes branching. Plays a crucial role in neuron polarization and migration in the cerebral cortex and the hippocampus. Regulates voltage-gated sodium channel transport and function. May also play a role in MAPK signaling. Required for the development of axonal initial segment-targeting inhibitory GABAergic synapses made by chandelier neurons. The polypeptide is Fibroblast growth factor 13 (Homo sapiens (Human)).